Here is a 467-residue protein sequence, read N- to C-terminus: Cysteine--tRNA ligase (467 aa).

Zn(2+) is bound at residue Cys28. Residues 30-40 carry the 'HIGH' region motif; it reads MTVYDHCHLGH. Cys209, His234, and Glu238 together coordinate Zn(2+). A 'KMSKS' region motif is present at residues 266–270; it reads KMSKS. Lys269 serves as a coordination point for ATP.

Belongs to the class-I aminoacyl-tRNA synthetase family. As to quaternary structure, monomer. It depends on Zn(2+) as a cofactor.

The protein resides in the cytoplasm. It catalyses the reaction tRNA(Cys) + L-cysteine + ATP = L-cysteinyl-tRNA(Cys) + AMP + diphosphate. The polypeptide is Cysteine--tRNA ligase (Nitrosomonas eutropha (strain DSM 101675 / C91 / Nm57)).